Consider the following 757-residue polypeptide: Transmembrane channel-like protein 1 (757 aa).

The tract at residues 1–74 (MLQIQVEEKE…RRRLRRGAEE (74 aa)) is disordered. Residues 1–176 (MLQIQVEEKE…KIKAIESQFG (176 aa)) are Cytoplasmic-facing. Positions 8–23 (EKEEDTEESSSEEEED) are enriched in acidic residues. At serine 30 the chain carries Phosphoserine. The residue at position 38 (threonine 38) is a Phosphothreonine. Residues 43 to 54 (NEDDPEPEPEDE) are compositionally biased toward acidic residues. The required for interaction with CIB2 stretch occupies residues 81–130 (EELERLKALLDENRQMIATVKCKPWKMEKKIEVLKEAKKFVSENEGALGK). A Phosphoserine modification is found at serine 122. Residues 177–214 (SSVASYFLFLRWMYGVNMVLFVLTFSLIMLPEYLWGLP) form a helical membrane-spanning segment. At 215–265 (YGSLPRKTVPRAEEASAANFGVLYDFNGLAQYSVLFYGYYDNKRTIGWLNF) the chain is on the extracellular side. The chain crosses the membrane as a helical span at residues 266-297 (RLPLSYFLVGIMCIGYSFLVVLKAMTKNIGDD). The segment at 298 to 352 (GGGDDNTFNFSWKVFCSWDYLIGNPETADNKFNSITMNFKEAIIEERAAQVEENI) is required for interaction with CIB2. The Cytoplasmic segment spans residues 298-353 (GGGDDNTFNFSWKVFCSWDYLIGNPETADNKFNSITMNFKEAIIEERAAQVEENIH). Residue serine 308 is modified to Phosphoserine. A helical membrane pass occupies residues 354-384 (LIRFLRFLANFFVFLTLGASGYLIFWAVKRS). Residues 385 to 396 (QEFAQQDPDTLG) are Extracellular-facing. Phosphothreonine is present on threonine 394. Residues 397–424 (WWEKNEMNMVMSLLGMFCPTLFDLFAEL) traverse the membrane as a helical segment. Residues 425 to 428 (EDYH) are Cytoplasmic-facing. Residues 429–463 (PLIALKWLLGRIFALLLGNLYVFILALMDEINNKI) form a helical membrane-spanning segment. At 464-512 (EEEKLVKANITLWEANMIKAYNESLSGLSGNTTGAPFFVHPADVPRGPC) the chain is on the extracellular side. Residues 513–550 (WETMVGQEFVRLTVSDVLTTYVTILIGDFLRACFVRFC) traverse the membrane as a helical segment. The Cytoplasmic segment spans residues 551-569 (NYCWCWDLEYGYPSYTEFD). The chain crosses the membrane as a helical span at residues 570–590 (ISGNVLALIFNQGMIWMGSFF). The Extracellular segment spans residues 591–593 (APS). A helical transmembrane segment spans residues 594–616 (LPGINILRLHTSMYFQCWAVMCC). Over 617–630 (NVPEARVFKASRSN) the chain is Cytoplasmic. Residues 631–654 (NFYLGMLLLILFLSTMPVLYMIVS) traverse the membrane as a helical segment. Residues 655 to 697 (LPPSFDCGPFSGKNRMFEVIGETLEHDFPSWMAKILRQLSNPG) lie on the Extracellular side of the membrane. Residues 698 to 731 (LVIAVILVMVLTIYYLNATAKGQKAANLDLKKKM) form a helical membrane-spanning segment. Residues 732–757 (KQQALENKMRNKKMAAARAAAAAGGQ) are Cytoplasmic-facing.

It belongs to the TMC family. Forms the MET channel composed of TMC dimer (TMC1 or TMC2), TMIE, TOMT, CIB (CIB2 or CIB3), LHFPL5 and PCDH15. Interacts with PIEZO1 and PIEZO2; the interaction may be part of the MET complex. The interaction of TMC1 and TMC2 with TOMT is required for the transportation of TMC1/2 into the stereocilia of hair cells. Interacts (via N-terminus) with both isoforms CD1 and CD3 of PCDH15. Can form a heterodimer with TMC2, TMC5 or TMC7. In terms of tissue distribution, detected in cochlear inner and outer hair cells and in neurosensory epithelia of the vestibular end organs. Also expressed in cortex, cerebellum, eye, colon, ovary and testis.

It is found in the cell membrane. It carries out the reaction Ca(2+)(in) = Ca(2+)(out). Its function is as follows. Pore-forming subunit of the mechanotransducer (MET) non-selective cation channel complex located at the tips of stereocilia of cochlear hair cells and that mediates sensory transduction in the auditory system. The MET complex is composed of two dimeric pore-forming ion-conducting transmembrane TMC (TMC1 or TMC2) subunits, several auxiliary proteins including LHFPL5, TMIE, CIB2/3 and TOMT, the tip-link PCDH15, and possibly the PIEZO subunits. MET channel is activated by tension in the tip-link extending from the side wall of one stereocilium to the tip of the adjacent shorter stereocilium, where the channel is located. TMC1 MET channel is highly permeable to calcium and likely transports monovalent cations. Also involved in vestibular hair cells transduction current. In Mus musculus (Mouse), this protein is Transmembrane channel-like protein 1.